The sequence spans 378 residues: 1-acyl-sn-glycerol-3-phosphate acyltransferase delta (378 aa).

Residues 11-31 (FLCHLVFCYVFIASGLIVNAI) traverse the membrane as a helical segment. An HXXXXD motif motif is present at residues 96-101 (HKFEID). A run of 3 helical transmembrane segments spans residues 125–145 (ELAY…IFCT), 311–331 (WLFW…SMVS), and 338–358 (LASL…MIGV).

The protein belongs to the 1-acyl-sn-glycerol-3-phosphate acyltransferase family.

Its subcellular location is the endoplasmic reticulum membrane. It carries out the reaction a 1-acyl-sn-glycero-3-phosphate + an acyl-CoA = a 1,2-diacyl-sn-glycero-3-phosphate + CoA. The catalysed reaction is (4Z,7Z,10Z,13Z,16Z,19Z)-docosahexaenoyl-CoA + 1-hexadecanoyl-sn-glycero-3-phosphate = 1-hexadecanoyl-2-(4Z,7Z,10Z,13Z,16Z,19Z-docosahexaenoyl)-sn-glycero-3-phosphate + CoA. It catalyses the reaction 1-octadecanoyl-sn-glycero-3-phosphate + (9Z,12Z)-octadecadienoyl-CoA = 1-octadecanoyl-2-(9Z,12Z-octadecadienoyl)-sn-glycero-3-phosphate + CoA. The enzyme catalyses 1-octadecanoyl-sn-glycero-3-phosphate + (4Z,7Z,10Z,13Z,16Z,19Z)-docosahexaenoyl-CoA = 1-octadecanoyl-2-(4Z,7Z,10Z,13Z,16Z,19Z-docosahexaenoyl)-sn-glycero-3-phosphate + CoA. It carries out the reaction (4Z,7Z,10Z,13Z,16Z,19Z)-docosahexaenoyl-CoA + 1-(9Z-octadecenoyl)-sn-glycero-3-phosphate = 1-(9Z-octadecenoyl)-2-(4Z,7Z,10Z,13Z,16Z,19Z-docosahexaenoyl)-sn-glycero-3-phosphate + CoA. It functions in the pathway phospholipid metabolism; CDP-diacylglycerol biosynthesis; CDP-diacylglycerol from sn-glycerol 3-phosphate: step 2/3. Its function is as follows. Converts 1-acyl-sn-glycerol-3-phosphate (lysophosphatidic acid or LPA) into 1,2-diacyl-sn-glycerol-3-phosphate (phosphatidic acid or PA) by incorporating an acyl moiety at the sn-2 position of the glycerol backbone. Exhibits high acyl-CoA specificity for polyunsaturated fatty acyl-CoA, especially docosahexaenoyl-CoA (22:6-CoA, DHA-CoA). The protein is 1-acyl-sn-glycerol-3-phosphate acyltransferase delta (Agpat4) of Rattus norvegicus (Rat).